A 406-amino-acid chain; its full sequence is Succinylornithine transaminase (406 aa).

At Lys-252 the chain carries N6-(pyridoxal phosphate)lysine.

Belongs to the class-III pyridoxal-phosphate-dependent aminotransferase family. AstC subfamily. The cofactor is pyridoxal 5'-phosphate.

The enzyme catalyses N(2)-succinyl-L-ornithine + 2-oxoglutarate = N-succinyl-L-glutamate 5-semialdehyde + L-glutamate. Its pathway is amino-acid degradation; L-arginine degradation via AST pathway; L-glutamate and succinate from L-arginine: step 3/5. Its function is as follows. Catalyzes the transamination of N(2)-succinylornithine and alpha-ketoglutarate into N(2)-succinylglutamate semialdehyde and glutamate. Can also act as an acetylornithine aminotransferase. This Escherichia coli (strain SMS-3-5 / SECEC) protein is Succinylornithine transaminase.